Reading from the N-terminus, the 571-residue chain is Methionine--tRNA ligase (571 aa).

Residues 10 to 20 carry the 'HIGH' region motif; the sequence is PYVNAVPHLGN. Zn(2+) is bound by residues cysteine 143, cysteine 146, cysteine 156, and cysteine 159. A 'KMSKS' region motif is present at residues 333–337; the sequence is KFSKS. Residue lysine 336 participates in ATP binding.

The protein belongs to the class-I aminoacyl-tRNA synthetase family. MetG type 1 subfamily. It depends on Zn(2+) as a cofactor.

It is found in the cytoplasm. The catalysed reaction is tRNA(Met) + L-methionine + ATP = L-methionyl-tRNA(Met) + AMP + diphosphate. Its function is as follows. Is required not only for elongation of protein synthesis but also for the initiation of all mRNA translation through initiator tRNA(fMet) aminoacylation. The polypeptide is Methionine--tRNA ligase (Sulfurisphaera tokodaii (strain DSM 16993 / JCM 10545 / NBRC 100140 / 7) (Sulfolobus tokodaii)).